The sequence spans 304 residues: Non-specific ribonucleoside hydrolase RihC (304 aa).

The active site involves His-233.

This sequence belongs to the IUNH family. RihC subfamily.

Its function is as follows. Hydrolyzes both purine and pyrimidine ribonucleosides with a broad-substrate specificity. The chain is Non-specific ribonucleoside hydrolase RihC from Escherichia coli O6:H1 (strain CFT073 / ATCC 700928 / UPEC).